The primary structure comprises 189 residues: Elongation factor P (189 aa).

Lys34 carries the N6-(3,6-diaminohexanoyl)-5-hydroxylysine modification.

Belongs to the elongation factor P family. In terms of processing, may be beta-lysylated on the epsilon-amino group of Lys-34 by the combined action of EpmA and EpmB, and then hydroxylated on the C5 position of the same residue by EpmC (if this protein is present). Lysylation is critical for the stimulatory effect of EF-P on peptide-bond formation. The lysylation moiety may extend toward the peptidyltransferase center and stabilize the terminal 3-CCA end of the tRNA. Hydroxylation of the C5 position on Lys-34 may allow additional potential stabilizing hydrogen-bond interactions with the P-tRNA.

It is found in the cytoplasm. It functions in the pathway protein biosynthesis; polypeptide chain elongation. Its function is as follows. Involved in peptide bond synthesis. Alleviates ribosome stalling that occurs when 3 or more consecutive Pro residues or the sequence PPG is present in a protein, possibly by augmenting the peptidyl transferase activity of the ribosome. Modification of Lys-34 is required for alleviation. This chain is Elongation factor P, found in Teredinibacter turnerae (strain ATCC 39867 / T7901).